Reading from the N-terminus, the 414-residue chain is Proton/glutamate-aspartate symporter (414 aa).

The Cytoplasmic segment spans residues 1–3 (MKK). The chain crosses the membrane as a helical span at residues 4–24 (LIAFQILIALAVGAVIGHFFP). The Extracellular portion of the chain corresponds to 25–42 (DFGMALRPVGDGFIRLIK). Residues 43-63 (MIVVPIVFSTIVIGAAGSGSM) traverse the membrane as a helical segment. Topologically, residues 64-73 (KKMGSLGIKT) are cytoplasmic. Residues 74–94 (IIWFEVITTLVLGLGLLLANV) form a helical membrane-spanning segment. At 95 to 144 (LKPGVGLDLSHLAKKDIHELSGYTDKVVDFKQMILDIIPTNIIDVMARND) the chain is on the extracellular side. The helical transmembrane segment at 145–165 (LLAVIFFAILFGVAAAGIGKA) threads the bilayer. Topologically, residues 166-182 (SEPVMKFFESTAQIMFK) are cytoplasmic. Residues 183–203 (LTQIVMVTAPIGVLALMAASV) form a helical membrane-spanning segment. Topologically, residues 204-219 (GQYGIELLLPMFKLVG) are extracellular. A helical membrane pass occupies residues 220–240 (TVFLGLFLILFVLFPLVGLIF). A topological domain (cytoplasmic) is located at residue Gln-241. A helical transmembrane segment spans residues 242 to 262 (IKYFEVLKMIWDLFLIAFSTT). Over 263-300 (STETILPQLMDRMEKYGCPKRVVSFVVPSGLSLNCDGS) the chain is Extracellular. A helical membrane pass occupies residues 301 to 321 (SLYLSVSCIFLAQAFQVDMTL). Topologically, residues 322 to 324 (SQQ) are cytoplasmic. The next 2 helical transmembrane spans lie at 325–345 (LLMM…PSGS) and 346–366 (LVVL…VAII). Residues 367–414 (AGVDRVMDMARTGVNVPGHAIACIVVSKWEKAFRQKEWVSANSQTESI) lie on the Cytoplasmic side of the membrane.

This sequence belongs to the dicarboxylate/amino acid:cation symporter (DAACS) (TC 2.A.23) family.

It is found in the cell membrane. Glutamate uptake is inhibited by beta-hydroxyaspartate and cysteic acid. Catalyzes the proton-dependent, binding-protein-independent transport of glutamate and aspartate. The chain is Proton/glutamate-aspartate symporter from Bacillus subtilis (strain 168).